The sequence spans 872 residues: DNA mismatch repair protein MutS (872 aa).

ATP is bound at residue 602-609; it reads GPNMSGKS.

This sequence belongs to the DNA mismatch repair MutS family.

In terms of biological role, this protein is involved in the repair of mismatches in DNA. It is possible that it carries out the mismatch recognition step. This protein has a weak ATPase activity. The polypeptide is DNA mismatch repair protein MutS (Staphylococcus aureus (strain bovine RF122 / ET3-1)).